The chain runs to 325 residues: Ribosomal RNA small subunit methyltransferase C (325 aa).

The protein belongs to the methyltransferase superfamily. RsmC family. Monomer.

The protein localises to the cytoplasm. It carries out the reaction guanosine(1207) in 16S rRNA + S-adenosyl-L-methionine = N(2)-methylguanosine(1207) in 16S rRNA + S-adenosyl-L-homocysteine + H(+). Its function is as follows. Specifically methylates the guanine in position 1207 of 16S rRNA in the 30S particle. In Alcanivorax borkumensis (strain ATCC 700651 / DSM 11573 / NCIMB 13689 / SK2), this protein is Ribosomal RNA small subunit methyltransferase C.